A 327-amino-acid chain; its full sequence is Pantothenate kinase (327 aa).

ATP is bound at residue 105–112 (GSVAVGKS).

This sequence belongs to the prokaryotic pantothenate kinase family.

The protein localises to the cytoplasm. The catalysed reaction is (R)-pantothenate + ATP = (R)-4'-phosphopantothenate + ADP + H(+). It functions in the pathway cofactor biosynthesis; coenzyme A biosynthesis; CoA from (R)-pantothenate: step 1/5. In Cutibacterium acnes (strain DSM 16379 / KPA171202) (Propionibacterium acnes), this protein is Pantothenate kinase.